The chain runs to 117 residues: Non-specific lipid-transfer protein 2 (117 aa).

A signal peptide spans Met-1–Ala-25. 4 disulfide bridges follow: Cys-29-Cys-76, Cys-39-Cys-53, Cys-54-Cys-99, and Cys-74-Cys-113.

It belongs to the plant LTP family.

In terms of biological role, plant non-specific lipid-transfer proteins transfer phospholipids as well as galactolipids across membranes. May play a role in wax or cutin deposition in the cell walls of expanding epidermal cells and certain secretory tissues. The sequence is that of Non-specific lipid-transfer protein 2 (LTP2) from Brassica napus (Rape).